A 421-amino-acid chain; its full sequence is MTATTAESGRPDQPPTAEAGRPVRLTLTRRAGRAPRHLADLTRQERRDVAVSLGQPAFRADQVARHYYARLIAADEPEAMTDLPERDRQPLLDALLPRLLVPVRTLSCDDGLTRKTAWRTVDGASLESVIMRYPDRATVCVSSQAGCGMGCPFCATGQGGLTRNLSTAEIVEQVVHAARVLRRRELAGGETRLSNVVFMGMGEPLANYAAVIAALRRLTAHPPEGLGLSARGLTVSTVGLVPAIRRLAGEGLPVTLAVSLHAPDDVLRNELVPINTRWPVVEVLAAAWEYAEVTGRRVSVEYALIDGVNDDVGRADALADLLVGRLAHVNLIPLNPTGGSSWRASAPAGQRAFVRRLRDRGIVTTVRDTRGREIAAACGQLAAEPAGKPERTDRPEQVGSDRLVEFGAVGSTTPDGDRVLR.

The disordered stretch occupies residues Met1–Val23. Glu127 acts as the Proton acceptor in catalysis. Residues Tyr133–Arg372 form the Radical SAM core domain. Cys140 and Cys378 are joined by a disulfide. Residues Cys147, Cys151, and Cys154 each coordinate [4Fe-4S] cluster. Residues Gly202–Glu203, Ser236, Ser259–His261, and Asn335 each bind S-adenosyl-L-methionine. Catalysis depends on Cys378, which acts as the S-methylcysteine intermediate. The interval Ala383–Arg421 is disordered. The segment covering Gly387–Glu396 has biased composition (basic and acidic residues).

This sequence belongs to the radical SAM superfamily. RlmN family. Requires [4Fe-4S] cluster as cofactor.

It is found in the cytoplasm. The enzyme catalyses adenosine(2503) in 23S rRNA + 2 reduced [2Fe-2S]-[ferredoxin] + 2 S-adenosyl-L-methionine = 2-methyladenosine(2503) in 23S rRNA + 5'-deoxyadenosine + L-methionine + 2 oxidized [2Fe-2S]-[ferredoxin] + S-adenosyl-L-homocysteine. It carries out the reaction adenosine(37) in tRNA + 2 reduced [2Fe-2S]-[ferredoxin] + 2 S-adenosyl-L-methionine = 2-methyladenosine(37) in tRNA + 5'-deoxyadenosine + L-methionine + 2 oxidized [2Fe-2S]-[ferredoxin] + S-adenosyl-L-homocysteine. In terms of biological role, specifically methylates position 2 of adenine 2503 in 23S rRNA and position 2 of adenine 37 in tRNAs. The chain is Probable dual-specificity RNA methyltransferase RlmN from Frankia casuarinae (strain DSM 45818 / CECT 9043 / HFP020203 / CcI3).